We begin with the raw amino-acid sequence, 142 residues long: Small ribosomal subunit protein uS12 (142 aa).

Positions 1–43 (MPTFNQLVRKGRKVIEKKSNSPALQKGFNSKKKKPTDVNSPQK) are disordered. Aspartate 102 carries the 3-methylthioaspartic acid modification.

It belongs to the universal ribosomal protein uS12 family. As to quaternary structure, part of the 30S ribosomal subunit. Contacts proteins S8 and S17. May interact with IF1 in the 30S initiation complex.

Functionally, with S4 and S5 plays an important role in translational accuracy. In terms of biological role, interacts with and stabilizes bases of the 16S rRNA that are involved in tRNA selection in the A site and with the mRNA backbone. Located at the interface of the 30S and 50S subunits, it traverses the body of the 30S subunit contacting proteins on the other side and probably holding the rRNA structure together. The combined cluster of proteins S8, S12 and S17 appears to hold together the shoulder and platform of the 30S subunit. This chain is Small ribosomal subunit protein uS12, found in Ruminiclostridium cellulolyticum (strain ATCC 35319 / DSM 5812 / JCM 6584 / H10) (Clostridium cellulolyticum).